A 471-amino-acid polypeptide reads, in one-letter code: Mannose-1-phosphate guanylyltransferase (471 aa).

The protein belongs to the mannose-6-phosphate isomerase type 2 family.

It catalyses the reaction alpha-D-mannose 1-phosphate + GTP + H(+) = GDP-alpha-D-mannose + diphosphate. It functions in the pathway nucleotide-sugar biosynthesis; GDP-alpha-D-mannose biosynthesis; GDP-alpha-D-mannose from alpha-D-mannose 1-phosphate (GTP route): step 1/1. Involved in GDP-mannose biosynthesis which serves as the activated sugar nucleotide precursor for mannose residues in cell surface polysaccharides. This enzyme participates in synthesis of the LPS O antigen. This chain is Mannose-1-phosphate guanylyltransferase (manC), found in Salmonella montevideo.